Here is a 231-residue protein sequence, read N- to C-terminus: Large ribosomal subunit protein uL1 (231 aa).

The protein belongs to the universal ribosomal protein uL1 family. Part of the 50S ribosomal subunit.

Functionally, binds directly to 23S rRNA. The L1 stalk is quite mobile in the ribosome, and is involved in E site tRNA release. Protein L1 is also a translational repressor protein, it controls the translation of the L11 operon by binding to its mRNA. The sequence is that of Large ribosomal subunit protein uL1 from Clostridium kluyveri (strain NBRC 12016).